An 87-amino-acid polypeptide reads, in one-letter code: U3-theraphotoxin-Hhn1f (87 aa).

The first 24 residues, 1–24 (MVNMKASMFLTSAGLVLLFVVCYA), serve as a signal peptide directing secretion. A propeptide spanning residues 25–52 (SESEEKEFPKEMLSSIFAVDNDFKQEER) is cleaved from the precursor. 3 disulfide bridges follow: Cys-54/Cys-67, Cys-61/Cys-72, and Cys-66/Cys-79.

The protein belongs to the neurotoxin 10 (Hwtx-1) family. 51 (Hntx-8) subfamily. Hntx-8 sub-subfamily. As to expression, expressed by the venom gland.

Its subcellular location is the secreted. Its function is as follows. Ion channel inhibitor. The chain is U3-theraphotoxin-Hhn1f from Cyriopagopus hainanus (Chinese bird spider).